Consider the following 381-residue polypeptide: cAMP-dependent protein kinase type I-alpha regulatory subunit (381 aa).

Residue Met1 is modified to N-acetylmethionine. Position 2 is an N-acetylalanine; in cAMP-dependent protein kinase type I-alpha regulatory subunit, N-terminally processed (Ala2). A dimerization and phosphorylation region spans residues 2-136 (ASGSMATSEE…ALAKAIEKNV (135 aa)). At Ser3 the chain carries Phosphoserine. The interval 73–96 (IRTDSREDEISPPPPNPVVKGRRR) is disordered. At Thr75 the chain carries Phosphothreonine. Ser77 and Ser83 each carry phosphoserine. Positions 96–100 (RRGAI) match the Pseudophosphorylation motif motif. Ser101 is modified (phosphoserine). 3',5'-cyclic AMP contacts are provided by residues 137-254 (LFSH…SKVS), Glu202, Arg211, 255-381 (ILES…SLSV), Glu326, and Arg335. Phosphoserine is present on Ser258.

It belongs to the cAMP-dependent kinase regulatory chain family. As to quaternary structure, the inactive holoenzyme is composed of two regulatory chains and two catalytic chains. Activation by cAMP releases the two active catalytic monomers and the regulatory dimer. Interacts with PRKACA and PRKACB. PRKAR1A also interacts with RFC2; the complex may be involved in cell survival. Interacts with AKAP4. Interacts with RARA; the interaction occurs in the presence of cAMP or FSH and regulates RARA transcriptional activity. Interacts with the phosphorylated form of PJA2. Interacts with PRKX; regulates this cAMP-dependent protein kinase. Interacts with CBFA2T3. Interacts with smAKAP; this interaction may target PRKAR1A to the plasma membrane. Interacts with AICDA. Post-translationally, the pseudophosphorylation site binds to the substrate-binding region of the catalytic chain, resulting in the inhibition of its activity.

Its subcellular location is the cell membrane. In terms of biological role, regulatory subunit of the cAMP-dependent protein kinases involved in cAMP signaling in cells. The chain is cAMP-dependent protein kinase type I-alpha regulatory subunit (Prkar1a) from Mus musculus (Mouse).